Here is a 1045-residue protein sequence, read N- to C-terminus: B3 domain-containing protein REM13 (1045 aa).

The TF-B3 1 DNA-binding region spans 7–96 (YPQFFHTLVP…VFHVSNLGPN (90 aa)). The tract at residues 121–147 (NNGDVCDSEELPKEKKAKTNSEEADAV) is disordered. Residues 130 to 141 (ELPKEKKAKTNS) are compositionally biased toward basic and acidic residues. 2 DNA-binding regions (TF-B3) span residues 157 to 253 (CFMA…FCPT) and 305 to 398 (FVTF…CSPE). Positions 423 to 449 (NRDKISNNDKEENMSWERKKDHLKSRD) are disordered. The TF-B3 4 DNA-binding region spans 474–570 (SNDSCLVVVS…TPVLSLCPAD (97 aa)). Residues 606–625 (IKDDNSKEKNDKEESKSVDG) form a disordered region. 3 DNA-binding regions (TF-B3) span residues 643–738 (FVTL…LRTE), 815–910 (FVTF…LRTK), and 940–1035 (FVTL…LKFS).

Its subcellular location is the nucleus. The chain is B3 domain-containing protein REM13 (REM13) from Arabidopsis thaliana (Mouse-ear cress).